We begin with the raw amino-acid sequence, 328 residues long: tRNA dimethylallyltransferase (328 aa).

25-32 lines the ATP pocket; sequence GPTAVGKT. Residue 27–32 coordinates substrate; that stretch reads TAVGKT. Residues 50 to 53 are interaction with substrate tRNA; that stretch reads DSMQ.

The protein belongs to the IPP transferase family. As to quaternary structure, monomer. Requires Mg(2+) as cofactor.

The catalysed reaction is adenosine(37) in tRNA + dimethylallyl diphosphate = N(6)-dimethylallyladenosine(37) in tRNA + diphosphate. Its function is as follows. Catalyzes the transfer of a dimethylallyl group onto the adenine at position 37 in tRNAs that read codons beginning with uridine, leading to the formation of N6-(dimethylallyl)adenosine (i(6)A). This chain is tRNA dimethylallyltransferase, found in Halothermothrix orenii (strain H 168 / OCM 544 / DSM 9562).